We begin with the raw amino-acid sequence, 546 residues long: 2-isopropylmalate synthase (546 aa).

Residues 8 to 271 (ILIFDTTLRD…NSFFKRNPDS (264 aa)) enclose the Pyruvate carboxyltransferase domain. The Mn(2+) site is built by aspartate 17, histidine 208, histidine 210, and asparagine 244. The segment at 408–546 (QLCLVQVSCG…NKTFLSNPAN (139 aa)) is regulatory domain.

The protein belongs to the alpha-IPM synthase/homocitrate synthase family. LeuA type 1 subfamily. As to quaternary structure, homodimer. Mn(2+) is required as a cofactor.

Its subcellular location is the cytoplasm. The enzyme catalyses 3-methyl-2-oxobutanoate + acetyl-CoA + H2O = (2S)-2-isopropylmalate + CoA + H(+). The protein operates within amino-acid biosynthesis; L-leucine biosynthesis; L-leucine from 3-methyl-2-oxobutanoate: step 1/4. Catalyzes the condensation of the acetyl group of acetyl-CoA with 3-methyl-2-oxobutanoate (2-ketoisovalerate) to form 3-carboxy-3-hydroxy-4-methylpentanoate (2-isopropylmalate). This chain is 2-isopropylmalate synthase, found in Prochlorococcus marinus (strain MIT 9312).